A 63-amino-acid polypeptide reads, in one-letter code: MSDVTVVNCPTCGKPVVWGEISPFRPFCSKRCQLIDLGEWAAEEKRIASSGDQSDSDDWSEER.

Zn(2+) is bound by residues cysteine 9, cysteine 12, cysteine 28, and cysteine 32.

The protein belongs to the DNA gyrase inhibitor YacG family. In terms of assembly, interacts with GyrB. It depends on Zn(2+) as a cofactor.

Functionally, inhibits all the catalytic activities of DNA gyrase by preventing its interaction with DNA. Acts by binding directly to the C-terminal domain of GyrB, which probably disrupts DNA binding by the gyrase. The sequence is that of DNA gyrase inhibitor YacG from Salmonella choleraesuis (strain SC-B67).